The following is a 553-amino-acid chain: Protein spartin (553 aa).

In terms of domain architecture, MIT spans 15-96 (IRTAYKAAMT…ETELRYRLKV (82 aa)). A disordered region spans residues 105-130 (DDSAVEATEESRAEMDTKRPPLLAEN). Basic and acidic residues predominate over residues 113-123 (EESRAEMDTKR). One can recognise a Senescence domain in the interval 325-509 (IVSAADFIAS…SQNVNYITPK (185 aa)).

In terms of assembly, interacts with Eps-15 (via C-terminal region); the interaction is required for spartin localization to the NMJ presynaptic membrane. Expressed in larval brain, ventral nerve cord and neuropil (at protein level).

Its subcellular location is the presynaptic cell membrane. It localises to the early endosome. The protein resides in the lipid droplet. During postembryonic development, functions with endocytic adapter Eps-15 in neurons to restrain synaptic growth, by inhibiting BMP signaling, and to control synaptic endocytosis. Required presynaptically for neuromuscular junction (NMJ) neurotransmission. Inhibits neuronal BMP signaling by promoting endocytic internalization and subsequent endosomal trafficking of the BMP receptor wit. In this way, regulates the Fmr1 translational regulator controlling Futsch expression to modulate neuronal microtubule stability, which controls both synaptogenesis and neuronal survival. The protein is Protein spartin of Drosophila melanogaster (Fruit fly).